Here is a 502-residue protein sequence, read N- to C-terminus: Probable cytosol aminopeptidase (502 aa).

Mn(2+) is bound by residues Lys269 and Asp274. Residue Lys281 is part of the active site. 3 residues coordinate Mn(2+): Asp292, Asp351, and Glu353. The active site involves Arg355.

The protein belongs to the peptidase M17 family. Requires Mn(2+) as cofactor.

It is found in the cytoplasm. The enzyme catalyses Release of an N-terminal amino acid, Xaa-|-Yaa-, in which Xaa is preferably Leu, but may be other amino acids including Pro although not Arg or Lys, and Yaa may be Pro. Amino acid amides and methyl esters are also readily hydrolyzed, but rates on arylamides are exceedingly low.. It catalyses the reaction Release of an N-terminal amino acid, preferentially leucine, but not glutamic or aspartic acids.. In terms of biological role, presumably involved in the processing and regular turnover of intracellular proteins. Catalyzes the removal of unsubstituted N-terminal amino acids from various peptides. The chain is Probable cytosol aminopeptidase from Shewanella loihica (strain ATCC BAA-1088 / PV-4).